The chain runs to 631 residues: MRRPKKYEAGEATQYISRRAALRKLQLSLNDFRRLCILKGVYPREPKHRRRAQKGSSEIKILYHTKDIRFLLHEPIVWTLRDYKIFAKKSGRDRAIKDFRNLKRRLALFPEIKLDHIVKERYPTFIDALKDLDDCLTLLFLFSTFPSLHLIPREQSNLCRRLTIEFLHYVIASKSLRKVFISIKGYYFQAEIKGQKVTWIVPHYYPFKPQSRQEVDFKVMSIFVEFYTIMLGFTNYRLYHGLNLAYPPQFPSSMLQDNEETLKDETSFVSERIAALNFELLRTDKVQEDEEEPDIDMELLEQDGDSKRIIKMKQEAQEIARLRNLFKGLKFFINREVPREPLVIIIRSFGGKVSWDSSVFSGSTYDESDETITHQIVDRPSLSTQYISRDYIQPQWVFDCVNQRQLLPTNKYFLGEELPPHLSPFVDAKRDTYVPPEEKALHDPSLIETHAQSDDESDEEEAAQNEDDTVDQELLDAQLQRAYQQETAEYKKYGGPDGVNEDEEDTDDDFDGEQESDEEEEELDEKTKRLQEEKKKMSVQSGKVHKVNKRQLHKAEVDEHRLQARMVKPRHRNLFRKLIREKQSKEKEEWLLRKKRRNIDNDTKEAKKLVKREAKKAAAAAAAAASQLGVK.

The BRCT domain maps to 321–414 (RLRNLFKGLK…QLLPTNKYFL (94 aa)). Disordered stretches follow at residues 450-469 (HAQSDDESDEEEAAQNEDDT) and 489-569 (EYKK…MVKP). Phosphoserine occurs at positions 453 and 457. Acidic residues-rich tracts occupy residues 454-469 (DDESDEEEAAQNEDDT) and 499-524 (VNEDEEDTDDDFDGEQESDEEEEELD). The stretch at 510 to 541 (FDGEQESDEEEEELDEKTKRLQEEKKKMSVQS) forms a coiled coil. The segment covering 525-536 (EKTKRLQEEKKK) has biased composition (basic and acidic residues). The segment covering 543 to 552 (KVHKVNKRQL) has biased composition (basic residues). Residues 553 to 562 (HKAEVDEHRL) are compositionally biased toward basic and acidic residues.

This sequence belongs to the pescadillo family.

It localises to the nucleus. It is found in the nucleolus. Its subcellular location is the nucleoplasm. Its function is as follows. Required for maturation of ribosomal RNAs and formation of the large ribosomal subunit. The sequence is that of Pescadillo homolog from Drosophila mojavensis (Fruit fly).